The following is a 141-amino-acid chain: Acetyltransferase YE1169 (141 aa).

The N-acetyltransferase domain maps to 1–141; it reads MEIRVFQQSD…GKRLIVDQEY (141 aa).

Belongs to the acetyltransferase family. YpeA subfamily.

This is Acetyltransferase YE1169 from Yersinia enterocolitica serotype O:8 / biotype 1B (strain NCTC 13174 / 8081).